A 93-amino-acid polypeptide reads, in one-letter code: Aspartyl/glutamyl-tRNA(Asn/Gln) amidotransferase subunit C (93 aa).

The protein belongs to the GatC family. As to quaternary structure, heterotrimer of A, B and C subunits.

The enzyme catalyses L-glutamyl-tRNA(Gln) + L-glutamine + ATP + H2O = L-glutaminyl-tRNA(Gln) + L-glutamate + ADP + phosphate + H(+). It catalyses the reaction L-aspartyl-tRNA(Asn) + L-glutamine + ATP + H2O = L-asparaginyl-tRNA(Asn) + L-glutamate + ADP + phosphate + 2 H(+). In terms of biological role, allows the formation of correctly charged Asn-tRNA(Asn) or Gln-tRNA(Gln) through the transamidation of misacylated Asp-tRNA(Asn) or Glu-tRNA(Gln) in organisms which lack either or both of asparaginyl-tRNA or glutaminyl-tRNA synthetases. The reaction takes place in the presence of glutamine and ATP through an activated phospho-Asp-tRNA(Asn) or phospho-Glu-tRNA(Gln). This is Aspartyl/glutamyl-tRNA(Asn/Gln) amidotransferase subunit C from Methanocella arvoryzae (strain DSM 22066 / NBRC 105507 / MRE50).